Here is a 242-residue protein sequence, read N- to C-terminus: Putative S-adenosyl-L-methionine-dependent methyltransferase Mmcs_0580 (242 aa).

S-adenosyl-L-methionine contacts are provided by residues aspartate 104 and 134-135; that span reads DL.

It belongs to the UPF0677 family.

In terms of biological role, exhibits S-adenosyl-L-methionine-dependent methyltransferase activity. This is Putative S-adenosyl-L-methionine-dependent methyltransferase Mmcs_0580 from Mycobacterium sp. (strain MCS).